The following is a 141-amino-acid chain: Large ribosomal subunit protein uL11 (141 aa).

The protein belongs to the universal ribosomal protein uL11 family. In terms of assembly, part of the ribosomal stalk of the 50S ribosomal subunit. Interacts with L10 and the large rRNA to form the base of the stalk. L10 forms an elongated spine to which L12 dimers bind in a sequential fashion forming a multimeric L10(L12)X complex. Post-translationally, one or more lysine residues are methylated.

Its function is as follows. Forms part of the ribosomal stalk which helps the ribosome interact with GTP-bound translation factors. This is Large ribosomal subunit protein uL11 from Chlamydia trachomatis serovar A (strain ATCC VR-571B / DSM 19440 / HAR-13).